The following is a 382-amino-acid chain: Lipid-A-disaccharide synthase (382 aa).

This sequence belongs to the LpxB family.

The enzyme catalyses 2-N,3-O-bis[(3R)-3-hydroxytetradecanoyl]-alpha-D-glucosaminyl 1-phosphate + UDP-2-N,3-O-bis[(3R)-3-hydroxytetradecanoyl]-alpha-D-glucosamine = lipid A disaccharide (E. coli) + UDP + H(+). The catalysed reaction is a lipid X + a UDP-2-N,3-O-bis[(3R)-3-hydroxyacyl]-alpha-D-glucosamine = a lipid A disaccharide + UDP + H(+). It participates in glycolipid biosynthesis; lipid IV(A) biosynthesis; lipid IV(A) from (3R)-3-hydroxytetradecanoyl-[acyl-carrier-protein] and UDP-N-acetyl-alpha-D-glucosamine: step 5/6. Functionally, condensation of UDP-2,3-diacylglucosamine and 2,3-diacylglucosamine-1-phosphate to form lipid A disaccharide, a precursor of lipid A, a phosphorylated glycolipid that anchors the lipopolysaccharide to the outer membrane of the cell. This is Lipid-A-disaccharide synthase from Salmonella paratyphi A (strain AKU_12601).